A 364-amino-acid polypeptide reads, in one-letter code: Aminomethyltransferase (364 aa).

The protein belongs to the GcvT family. As to quaternary structure, the glycine cleavage system is composed of four proteins: P, T, L and H.

The enzyme catalyses N(6)-[(R)-S(8)-aminomethyldihydrolipoyl]-L-lysyl-[protein] + (6S)-5,6,7,8-tetrahydrofolate = N(6)-[(R)-dihydrolipoyl]-L-lysyl-[protein] + (6R)-5,10-methylene-5,6,7,8-tetrahydrofolate + NH4(+). The glycine cleavage system catalyzes the degradation of glycine. The polypeptide is Aminomethyltransferase (Escherichia coli O6:H1 (strain CFT073 / ATCC 700928 / UPEC)).